Reading from the N-terminus, the 206-residue chain is Large ribosomal subunit protein uL4 (206 aa).

Residues 65 to 76 (KQKGTGRARHSS) are compositionally biased toward basic residues. Residues 65-94 (KQKGTGRARHSSARAPQFRGGGKAHGPVVR) form a disordered region.

It belongs to the universal ribosomal protein uL4 family. In terms of assembly, part of the 50S ribosomal subunit.

Functionally, one of the primary rRNA binding proteins, this protein initially binds near the 5'-end of the 23S rRNA. It is important during the early stages of 50S assembly. It makes multiple contacts with different domains of the 23S rRNA in the assembled 50S subunit and ribosome. In terms of biological role, forms part of the polypeptide exit tunnel. This is Large ribosomal subunit protein uL4 from Bartonella quintana (strain Toulouse) (Rochalimaea quintana).